We begin with the raw amino-acid sequence, 833 residues long: Leucine--tRNA ligase (833 aa).

The short motif at 41 to 52 is the 'HIGH' region element; that stretch reads PYPSGAGLHVGH. The 'KMSKS' region motif lies at 610-614; sequence KMSKS. Lysine 613 provides a ligand contact to ATP.

Belongs to the class-I aminoacyl-tRNA synthetase family.

It localises to the cytoplasm. It carries out the reaction tRNA(Leu) + L-leucine + ATP = L-leucyl-tRNA(Leu) + AMP + diphosphate. This is Leucine--tRNA ligase from Streptococcus mutans serotype c (strain ATCC 700610 / UA159).